The following is a 96-amino-acid chain: DNA-directed RNA polymerase subunit Rpo11 (96 aa).

Belongs to the archaeal Rpo11/eukaryotic RPB11/RPC19 RNA polymerase subunit family. In terms of assembly, part of the RNA polymerase complex.

Its subcellular location is the cytoplasm. The enzyme catalyses RNA(n) + a ribonucleoside 5'-triphosphate = RNA(n+1) + diphosphate. Its function is as follows. DNA-dependent RNA polymerase (RNAP) catalyzes the transcription of DNA into RNA using the four ribonucleoside triphosphates as substrates. The protein is DNA-directed RNA polymerase subunit Rpo11 of Methanococcus maripaludis (strain C5 / ATCC BAA-1333).